We begin with the raw amino-acid sequence, 563 residues long: Protein NOXP20 (563 aa).

A disordered region spans residues 1–84; it reads MSDDAGDTLA…ANALEPPLNG (84 aa). The segment covering 56 to 68 has biased composition (low complexity); the sequence is AAVQGAGAAAIGP. Serine 120 carries the post-translational modification Phosphoserine. Positions 165 to 206 are disordered; the sequence is VNSGSSEGAQPNTENGVPEITDAATDQGPAESPPTSPSSASR. Residues 166–179 show a composition bias toward polar residues; the sequence is NSGSSEGAQPNTEN. Phosphothreonine occurs at positions 185 and 189. Serine 196 carries the phosphoserine modification. Phosphothreonine is present on threonine 199. A phosphoserine mark is found at serine 202 and serine 261. Residues 343–367 are a coiled coil; it reads AAKELENEENQEEQGLEEKGEEFAR. Residues 411–436 are disordered; that stretch reads SEEETKKEEKEEKSQDPQEDKKEEKK.

It belongs to the FAM114 family.

It is found in the cytoplasm. Its function is as follows. May play a role in neuronal cell development. The sequence is that of Protein NOXP20 (FAM114A1) from Homo sapiens (Human).